The chain runs to 373 residues: Schlafen-like protein 1 (373 aa).

The tract at residues 1 to 67 is disordered; sequence MAALFEENDS…ELSSEEVDIP (67 aa). Residues 247 to 373 are SLFN-like fold; that stretch reads KAGAKIEFRT…NQVYRLESSV (127 aa).

It belongs to the Schlafen family. As to quaternary structure, component of the trimeric PUCH (precursor of 21U RNA 5'-end cleavage holoenzyme) complex; consisting of tofu-1, tofu-2 and either slfl-3 or slfl-4; which is required for processing of piRNA precursors. Within the complex, interacts (via N-terminus) with tofu-2 (via N-terminus); the interaction stabilizes tofu-2 and may form a functional nuclease. Within the complex, required for the interaction of tofu-2 (via N-terminus) with slfl-3 (via N-terminus). Interacts (via residues 82-172) with the PETISCO complex subunit tofu-6 (via residues 120-314); the interaction between the PETISCO and PUCH complex members enhances piRNA production in vivo. In terms of tissue distribution, expressed in the germline.

It is found in the cytoplasm. Functionally, component of the trimeric PUCH (precursor of 21U RNA 5'-end cleavage holoenzyme) complex, that acts as an endoribonuclease processing the 5'-end of precursor Piwi-interacting RNAs (piRNAs). The PUCH complex consists of tofu-1, tofu-2 and either slfl-3 or slfl-4, with tofu-2 exhibiting endoribonuclease activity. PUCH-mediated processing strictly requires a 7-methyl-G cap (m7 G-cap) and an uracil at position three (U3). PUCH also exhibits a strict bias for piRNA precursors with an A or G at position 1. Mature piRNA production is enhanced by the interaction of PUCH with the PETISCO complex, which is stabilizing piRNA precursors and allows their processing by PUCH. This Caenorhabditis elegans protein is Schlafen-like protein 1.